The chain runs to 568 residues: Urease subunit alpha (568 aa).

Ni(2+) is bound by residues His134, His136, and Lys217. At Lys217 the chain carries N6-carboxylysine. His219 contacts substrate. Ni(2+) is bound by residues His246 and His272. Catalysis depends on His320, which acts as the Proton donor. Asp360 is a Ni(2+) binding site.

Belongs to the metallo-dependent hydrolases superfamily. Urease alpha subunit family. Heterotrimer of UreA (gamma), UreB (beta) and UreC (alpha) subunits. Three heterotrimers associate to form the active enzyme. Requires Ni cation as cofactor. In terms of processing, carboxylation allows a single lysine to coordinate two nickel ions.

The protein resides in the cytoplasm. It carries out the reaction urea + 2 H2O + H(+) = hydrogencarbonate + 2 NH4(+). It participates in nitrogen metabolism; urea degradation; CO(2) and NH(3) from urea (urease route): step 1/1. The sequence is that of Urease subunit alpha from Marinomonas sp. (strain MWYL1).